Reading from the N-terminus, the 210-residue chain is ATP-dependent Clp protease proteolytic subunit (210 aa).

The active-site Nucleophile is the S107. H132 is a catalytic residue.

It belongs to the peptidase S14 family. As to quaternary structure, fourteen ClpP subunits assemble into 2 heptameric rings which stack back to back to give a disk-like structure with a central cavity, resembling the structure of eukaryotic proteasomes.

The protein localises to the cytoplasm. It catalyses the reaction Hydrolysis of proteins to small peptides in the presence of ATP and magnesium. alpha-casein is the usual test substrate. In the absence of ATP, only oligopeptides shorter than five residues are hydrolyzed (such as succinyl-Leu-Tyr-|-NHMec, and Leu-Tyr-Leu-|-Tyr-Trp, in which cleavage of the -Tyr-|-Leu- and -Tyr-|-Trp bonds also occurs).. Cleaves peptides in various proteins in a process that requires ATP hydrolysis. Has a chymotrypsin-like activity. Plays a major role in the degradation of misfolded proteins. This is ATP-dependent Clp protease proteolytic subunit from Chromobacterium violaceum (strain ATCC 12472 / DSM 30191 / JCM 1249 / CCUG 213 / NBRC 12614 / NCIMB 9131 / NCTC 9757 / MK).